Reading from the N-terminus, the 73-residue chain is U3-agatoxin-Ao1j (73 aa).

A signal peptide spans 1-20; that stretch reads MRTIISLLLLSAMVFAVIEA. Positions 21–34 are excised as a propeptide; sequence ISLEEGLQLFEGER. Cystine bridges form between Cys36–Cys52, Cys43–Cys57, Cys51–Cys67, and Cys59–Cys65. Ser71 is modified (serine amide).

The protein belongs to the neurotoxin 07 (Beta/delta-agtx) family. 03 (aga-4) subfamily. Aga sub-subfamily. Expressed by the venom gland.

It localises to the secreted. In terms of biological role, insecticidal neurotoxin that induces an irreversible spastic paralysis when injected into insects. Modifies presynaptic voltage-gated sodium channels (Nav), causing them to open at the normal resting potential of the nerve. This leads to spontaneous release of neurotransmitter and repetitive action potentials in motor neurons. The polypeptide is U3-agatoxin-Ao1j (Agelena orientalis (Funnel-web spider)).